A 128-amino-acid chain; its full sequence is Gastrotropin (128 aa).

Position 2 is an N-acetylalanine (A2).

It belongs to the calycin superfamily. Fatty-acid binding protein (FABP) family. As to expression, expressed in ovary granulosa and luteal cells.

Its subcellular location is the cytoplasm. It is found in the membrane. Its function is as follows. Binds to bile acids and is involved in enterohepatic bile acid metabolism. Required for efficient apical to basolateral transport of conjugated bile acids in ileal enterocytes. Stimulates gastric acid and pepsinogen secretion. This Mus musculus (Mouse) protein is Gastrotropin (Fabp6).